The following is a 121-amino-acid chain: Small ribosomal subunit protein uS13 (121 aa).

The tract at residues 92-121 is disordered; sequence KRGLPVRGQRTRTNARTRKGPRRAAASLKK.

Belongs to the universal ribosomal protein uS13 family. As to quaternary structure, part of the 30S ribosomal subunit. Forms a loose heterodimer with protein S19. Forms two bridges to the 50S subunit in the 70S ribosome.

Functionally, located at the top of the head of the 30S subunit, it contacts several helices of the 16S rRNA. In the 70S ribosome it contacts the 23S rRNA (bridge B1a) and protein L5 of the 50S subunit (bridge B1b), connecting the 2 subunits; these bridges are implicated in subunit movement. Contacts the tRNAs in the A and P-sites. This Bordetella bronchiseptica (strain ATCC BAA-588 / NCTC 13252 / RB50) (Alcaligenes bronchisepticus) protein is Small ribosomal subunit protein uS13.